Consider the following 21-residue polypeptide: Endo-1,4-beta-xylanase A (21 aa).

This sequence belongs to the glycosyl hydrolase 10 (cellulase F) family.

The catalysed reaction is Endohydrolysis of (1-&gt;4)-beta-D-xylosidic linkages in xylans.. It participates in glycan degradation; xylan degradation. The chain is Endo-1,4-beta-xylanase A from Dictyoglomus sp. (strain B4A).